A 97-amino-acid chain; its full sequence is RNA-binding protein Hfq (97 aa).

Residues aspartate 10 to valine 70 form the Sm domain. A disordered region spans residues histidine 74–glutamate 97. Residues alanine 81–glutamate 97 show a composition bias toward polar residues.

The protein belongs to the Hfq family. As to quaternary structure, homohexamer.

In terms of biological role, RNA chaperone that binds small regulatory RNA (sRNAs) and mRNAs to facilitate mRNA translational regulation in response to envelope stress, environmental stress and changes in metabolite concentrations. Also binds with high specificity to tRNAs. The sequence is that of RNA-binding protein Hfq from Neisseria meningitidis serogroup A / serotype 4A (strain DSM 15465 / Z2491).